A 389-amino-acid chain; its full sequence is Arrestin-C (389 aa).

Belongs to the arrestin family. Retina and pineal gland.

May play a role in an as yet undefined retina-specific signal transduction. Could bind to photoactivated-phosphorylated red/green opsins. The sequence is that of Arrestin-C (arr3) from Aquarana catesbeiana (American bullfrog).